The primary structure comprises 205 residues: UPF0301 protein Bind_0718 (205 aa).

The protein belongs to the UPF0301 (AlgH) family.

In Beijerinckia indica subsp. indica (strain ATCC 9039 / DSM 1715 / NCIMB 8712), this protein is UPF0301 protein Bind_0718.